Reading from the N-terminus, the 142-residue chain is Large ribosomal subunit protein uL13 (142 aa).

Belongs to the universal ribosomal protein uL13 family. Part of the 50S ribosomal subunit.

Its function is as follows. This protein is one of the early assembly proteins of the 50S ribosomal subunit, although it is not seen to bind rRNA by itself. It is important during the early stages of 50S assembly. The polypeptide is Large ribosomal subunit protein uL13 (Laribacter hongkongensis (strain HLHK9)).